A 54-amino-acid chain; its full sequence is Large ribosomal subunit protein bL32 (54 aa).

Residues 1–54 form a disordered region; that stretch reads MAVQQNRKTRSRRGMRRSHDALTAAQLSVDSTSGETHRRHHVTADGYYRGKKVI. Over residues 7–16 the composition is skewed to basic residues; it reads RKTRSRRGMR. Positions 25–34 are enriched in polar residues; the sequence is AQLSVDSTSG.

It belongs to the bacterial ribosomal protein bL32 family.

The sequence is that of Large ribosomal subunit protein bL32 from Tolumonas auensis (strain DSM 9187 / NBRC 110442 / TA 4).